An 812-amino-acid polypeptide reads, in one-letter code: ATP-dependent zinc metalloprotease FtsH (812 aa).

At 1–21 (MPPSPPRPPKFPGSGRPESPN) the chain is on the cytoplasmic side. Residues 22-42 (WGVWVMVLLIVGVLAFGFFTP) traverse the membrane as a helical segment. Residues 43-241 (ESFGLGPRKE…TKFKRESGSW (199 aa)) are Extracellular-facing. A helical transmembrane segment spans residues 242 to 262 (GGILLNLLPIVLILVILFFMF). Residues 263–812 (RAQSGGARGA…EFGKDGGEKK (550 aa)) are Cytoplasmic-facing. 333 to 340 (GAPGTGKT) contributes to the ATP binding site. Residue His-555 coordinates Zn(2+). Glu-556 is an active-site residue. Zn(2+) is bound by residues His-559 and Asp-631. Residues 739 to 812 (KNPPARVTPP…EFGKDGGEKK (74 aa)) are disordered. Basic and acidic residues-rich tracts occupy residues 757-785 (QPGK…RKME) and 803-812 (EFGKDGGEKK).

In the central section; belongs to the AAA ATPase family. This sequence in the C-terminal section; belongs to the peptidase M41 family. As to quaternary structure, homohexamer. The cofactor is Zn(2+).

It localises to the cell membrane. In terms of biological role, acts as a processive, ATP-dependent zinc metallopeptidase for both cytoplasmic and membrane proteins. Plays a role in the quality control of integral membrane proteins. The sequence is that of ATP-dependent zinc metalloprotease FtsH from Akkermansia muciniphila (strain ATCC BAA-835 / DSM 22959 / JCM 33894 / BCRC 81048 / CCUG 64013 / CIP 107961 / Muc).